The primary structure comprises 311 residues: Ribosomal RNA small subunit methyltransferase H (311 aa).

Residues 33–35 (AGH), Asp53, Phe80, Asp101, and Gln108 each bind S-adenosyl-L-methionine.

Belongs to the methyltransferase superfamily. RsmH family.

The protein localises to the cytoplasm. It carries out the reaction cytidine(1402) in 16S rRNA + S-adenosyl-L-methionine = N(4)-methylcytidine(1402) in 16S rRNA + S-adenosyl-L-homocysteine + H(+). In terms of biological role, specifically methylates the N4 position of cytidine in position 1402 (C1402) of 16S rRNA. In Alkaliphilus oremlandii (strain OhILAs) (Clostridium oremlandii (strain OhILAs)), this protein is Ribosomal RNA small subunit methyltransferase H.